A 564-amino-acid chain; its full sequence is Probable diguanylate cyclase DgcQ (564 aa).

2 helical membrane-spanning segments follow: residues 20-40 and 360-380; these read LGPG…STLL and IALT…WYVI. The 136-residue stretch at 428-563 folds into the GGDEF domain; sequence HPFSVIQVDL…GRNRVFASDN (136 aa). Residue D436 coordinates Mg(2+). Residues N444, H449, and D453 each coordinate substrate. Mg(2+) is bound at residue E479. Residue E479 is the Proton acceptor of the active site.

Homodimer. Requires Mg(2+) as cofactor.

It localises to the cell inner membrane. It carries out the reaction 2 GTP = 3',3'-c-di-GMP + 2 diphosphate. It functions in the pathway glycan metabolism; bacterial cellulose biosynthesis. It participates in purine metabolism; 3',5'-cyclic di-GMP biosynthesis. Functionally, catalyzes the synthesis of cyclic-di-GMP (c-di-GMP) via the condensation of 2 GTP molecules. Cyclic-di-GMP is a second messenger which controls cell surface-associated traits in bacteria. Involved in the regulation of cellulose production. This chain is Probable diguanylate cyclase DgcQ, found in Escherichia coli O157:H7.